Here is a 553-residue protein sequence, read N- to C-terminus: Formate--tetrahydrofolate ligase (553 aa).

65–72 (TPAGEGKS) provides a ligand contact to ATP.

It belongs to the formate--tetrahydrofolate ligase family.

It catalyses the reaction (6S)-5,6,7,8-tetrahydrofolate + formate + ATP = (6R)-10-formyltetrahydrofolate + ADP + phosphate. It functions in the pathway one-carbon metabolism; tetrahydrofolate interconversion. The chain is Formate--tetrahydrofolate ligase from Brachyspira hyodysenteriae (strain ATCC 49526 / WA1).